The chain runs to 158 residues: Transcription elongation factor GreA (158 aa).

This sequence belongs to the GreA/GreB family.

In terms of biological role, necessary for efficient RNA polymerase transcription elongation past template-encoded arresting sites. The arresting sites in DNA have the property of trapping a certain fraction of elongating RNA polymerases that pass through, resulting in locked ternary complexes. Cleavage of the nascent transcript by cleavage factors such as GreA or GreB allows the resumption of elongation from the new 3'terminus. GreA releases sequences of 2 to 3 nucleotides. The sequence is that of Transcription elongation factor GreA from Baumannia cicadellinicola subsp. Homalodisca coagulata.